Consider the following 85-residue polypeptide: Large ribosomal subunit protein eL43 (85 aa).

The C4-type zinc-finger motif lies at 38–59 (CPVCGRKAVRRISTGIWQCQKC).

It belongs to the eukaryotic ribosomal protein eL43 family. The cofactor is Zn(2+).

The sequence is that of Large ribosomal subunit protein eL43 from Thermococcus sibiricus (strain DSM 12597 / MM 739).